Here is a 401-residue protein sequence, read N- to C-terminus: MREAFICDGIRTPIGRYGGALSGVRADDLAAIPLRELLVRNPRLDAECIDDVILGCANQAGEDNRNVARMATLLAGLPQSVSGTTINRLCGSGLDALGFAARAIKAGDGDLLIAGGVESMSRAPFVMGKATSAFSRQAEMFDTTIGWRFVNPLMAQQFGTDSMPETAENVAELLKISREDQDSFALRSQQRTAKAQSSGILAEEIVPVVLKNKKGVVTEIQHDEHLRPETTLEQLRGLKAPFRANGVITAGNASGVNDGAAALIIASEQMAAAQGLTPRARIVAMATAGVEPRLMGLGPVPATRRVLERAGLSIHDMDVIELNEAFAAQALGVLRELGLPDDAPHVNPNGGAIALGHPLGMSGARLALAASHELHRRNGRYALCTMCIGVGQGIAMILERV.

Cys-90 functions as the Acyl-thioester intermediate in the catalytic mechanism. Active-site proton acceptor residues include His-357 and Cys-387.

Belongs to the thiolase-like superfamily. Thiolase family.

It carries out the reaction succinyl-CoA + acetyl-CoA = 3-oxoadipyl-CoA + CoA. It functions in the pathway aromatic compound metabolism; phenylacetate degradation. Its function is as follows. Catalyzes thiolytic cleavage of beta-ketoadipyl-CoA to succinyl-CoA and acetyl-CoA. This Escherichia coli protein is Beta-ketoadipyl-CoA thiolase (paaJ).